The primary structure comprises 899 residues: RNA-binding motif protein 25 (899 aa).

Over residues 1 to 20 (MADESSSPATGDPNSQKPES) the composition is skewed to polar residues. The interval 1–112 (MADESSSPAT…SMPQYQPQPG (112 aa)) is disordered. The segment covering 26–63 (IPNPNPNPSLTPPPPQQHSQPPVAPLVPPGPPYAPPAQ) has biased composition (pro residues). One can recognise an RRM domain in the interval 204–281 (TTIYIGKIAT…QELLVNVNQA (78 aa)). 2 disordered regions span residues 298 to 572 (KKAK…EQNL) and 611 to 778 (GESA…KESG). 2 stretches are compositionally biased toward basic and acidic residues: residues 317–340 (EQDK…KENI) and 354–372 (EADR…ERLK). A compositionally biased stretch (pro residues) spans 375–384 (PLPPPPPPPA). Over residues 430–505 (WSKRNDRRSR…QYEKEKEKEK (76 aa)) the composition is skewed to basic and acidic residues. The stretch at 434–578 (NDRRSRERGE…EQNLQQQQLD (145 aa)) forms a coiled coil. The segment covering 515–524 (YEEEEEEDDD) has biased composition (acidic residues). Positions 526 to 533 (SRRRWHRA) match the Nuclear localization signal 1 motif. Residues 533 to 568 (AALDERRRRQLREKEDDLADRLKEEEEVAEAKRSAE) show a composition bias toward basic and acidic residues. Over residues 626-640 (GSGNESMAIDNNSGS) the composition is skewed to polar residues. 2 stretches are compositionally biased toward basic and acidic residues: residues 723 to 733 (PKEETIETEKQ) and 740 to 778 (DKAS…KESG). A Nuclear localization signal 2 motif is present at residues 735-742 (SRRSHDKA). A PWI domain is found at 802-899 (EDLFSYEINW…EAGVPVKSKA (98 aa)).

As to quaternary structure, specifically associates with functional splicing complexes. Associates with exon junction complex (EJC) proteins. In terms of processing, phosphorylated; the phosphorylation level is repressed by abscisic acid (ABA).

The protein localises to the nucleus. In terms of biological role, RNA-binding protein that acts as a regulator of alternative pre-mRNA splicing. Negative regulator of responses to abscisic acid (ABA), including in early development. This is RNA-binding motif protein 25 from Arabidopsis thaliana (Mouse-ear cress).